Consider the following 81-residue polypeptide: Escargot/snail protein homolog (81 aa).

4 C2H2-type zinc fingers span residues 1–5, 17–39, 43–65, and 71–81; these read HQQFH, FSCK…IRTH, CKCH…IRTH, and FSCQHCNRAFA.

Belongs to the snail C2H2-type zinc-finger protein family.

Its subcellular location is the nucleus. This chain is Escargot/snail protein homolog, found in Apis mellifera (Honeybee).